We begin with the raw amino-acid sequence, 242 residues long: ATP synthase subunit a (242 aa).

The next 6 membrane-spanning stretches (helical) occupy residues 29 to 49 (SSIY…LAFY), 84 to 104 (FIPL…LGMT), 114 to 134 (IIVT…VGFI), 140 to 160 (FLTL…MIVI), 181 to 201 (MAGH…MIYL), and 203 to 223 (FLPI…AILQ).

The protein belongs to the ATPase A chain family. As to quaternary structure, F-type ATPases have 2 components, CF(1) - the catalytic core - and CF(0) - the membrane proton channel. CF(1) has five subunits: alpha(3), beta(3), gamma(1), delta(1), epsilon(1). CF(0) has three main subunits: a(1), b(2) and c(9-12). The alpha and beta chains form an alternating ring which encloses part of the gamma chain. CF(1) is attached to CF(0) by a central stalk formed by the gamma and epsilon chains, while a peripheral stalk is formed by the delta and b chains.

It is found in the cell inner membrane. Functionally, key component of the proton channel; it plays a direct role in the translocation of protons across the membrane. The polypeptide is ATP synthase subunit a (Rickettsia typhi (strain ATCC VR-144 / Wilmington)).